We begin with the raw amino-acid sequence, 477 residues long: MDAVELARRLQEEATCSICLDYFTDPVMTACGHNFCRECIQMSWEKGKGKKGKKKQKGSFPCPECREMSPQRNLRPNRLLTKVAEMARQHPGLHKRDLCQIHQEPLKLFCQDDQTPICVVCREAQEHRMHRVLPLDEAAREYKLRLEEDIKYLREEMMKTETLQAKEEQTLTEWQERVKERRERILEEFQKVVLFLVEEERRLLQILKKEEDDTLGKLQDSKASLDHQSRSLDLILLQLEEQTQQEPLQMLQDVKDTLTRKESLSMQYPEVVLPVAIKTVCRVPGQIEVLKSFQEDVVPDPSTAYPYLLLYESRQRRYLSPPPEGSAPYSKDRFLAYPCAVGQKSFSSGRHYWEVGMNLTGDALWALGVCRDNVSRKDRVLKSPENGFWVVQLSKGKKHLPLLPNSIPVTLTEPPSHMGIFLDFQAGEVSFYSVNDGSHLHSFSQVAFPGPLLPFFCLGSPKSGQMVISTVTMWVKG.

The RING-type zinc finger occupies 16–66 (CSICLDYFTDPVMTACGHNFCRECIQMSWEKGKGKKGKKKQKGSFPCPECR). The segment at 94-135 (HKRDLCQIHQEPLKLFCQDDQTPICVVCREAQEHRMHRVLPL) adopts a B box-type zinc-finger fold. Positions 99, 102, 121, and 127 each coordinate Zn(2+). Positions 135–225 (LDEAAREYKL…GKLQDSKASL (91 aa)) form a coiled coil. One can recognise a B30.2/SPRY domain in the interval 276–475 (AIKTVCRVPG…MVISTVTMWV (200 aa)).

This sequence belongs to the TRIM/RBCC family. Interacts (via coiled coil) with TRIM44 (via coiled coil). Interacts with TRIM28; this interaction prevents TRIM28 activity on BCL2A1. Interacts with TRIM41; this interaction prevents TRIM41 activity on ZSCAN2. Interacts with BECN1. Interacts with NFATC3 and NFATC4; these interactions prevent NFATC3 and NFATC4 nuclear localization. Auto-ubiquitinated. As to expression, expressed almost exclusively in the testis.

It localises to the cytoplasm. The protein resides in the lysosome. It carries out the reaction S-ubiquitinyl-[E2 ubiquitin-conjugating enzyme]-L-cysteine + [acceptor protein]-L-lysine = [E2 ubiquitin-conjugating enzyme]-L-cysteine + N(6)-ubiquitinyl-[acceptor protein]-L-lysine.. The protein operates within protein modification; protein ubiquitination. Its function is as follows. E3 ubiquitin ligase that plays important roles in the regulation of neuronal apoptosis, selective autophagy or cell proliferation. Stimulates the degradation of kinetochore ZW10 interacting protein ZWINT in a proteasome-dependent manner, leading to negative regulation of cell proliferation. Inhibits autophagic degradation of diverse known targets while contributing to autophagy of midbodies. Autophagy-inhibitory activity involves MCL1, which TRIM17 assembles into complexes with the key autophagy regulator BECN1. Controls neuronal apoptosis by mediating ubiquitination and degradation of MCL1 to initiate neuronal death. In addition, regulates NFAT transcription factors NFATC3 and NFATC4 activities by preventing their nuclear localization, thus inhibiting their transcriptional activities. Decreases TRIM41-mediated degradation of ZSCAN2 thereby stimulating alpha-synuclein/SNCA transcription in neuronal cells. Prevents the E3 ubiquitin-ligase activity of TRIM28 and its interaction with anti-apoptotic BCL2A1, blocking TRIM28 from ubiquitinating BCL2A1. The protein is E3 ubiquitin-protein ligase TRIM17 (Trim17) of Rattus norvegicus (Rat).